Reading from the N-terminus, the 89-residue chain is Small ribosomal subunit protein uS15 (89 aa).

The protein belongs to the universal ribosomal protein uS15 family. Part of the 30S ribosomal subunit. Forms a bridge to the 50S subunit in the 70S ribosome, contacting the 23S rRNA.

Its function is as follows. One of the primary rRNA binding proteins, it binds directly to 16S rRNA where it helps nucleate assembly of the platform of the 30S subunit by binding and bridging several RNA helices of the 16S rRNA. In terms of biological role, forms an intersubunit bridge (bridge B4) with the 23S rRNA of the 50S subunit in the ribosome. The chain is Small ribosomal subunit protein uS15 from Kocuria rhizophila (strain ATCC 9341 / DSM 348 / NBRC 103217 / DC2201).